Here is a 910-residue protein sequence, read N- to C-terminus: Chitin synthase A (910 aa).

A disordered region spans residues 56-156 (NYHDDYDPRP…EPAPTPTPAP (101 aa)). Composition is skewed to basic and acidic residues over residues 57–84 (YHDD…HHDA) and 130–148 (DPHD…HDEP). 9 consecutive transmembrane segments (helical) span residues 366 to 386 (WFFQ…IDAG), 448 to 468 (SAFG…YVAL), 583 to 603 (VYQT…FLVF), 620 to 640 (VLFI…FILS), 655 to 675 (MVYF…FITV), 701 to 721 (TLII…IIFL), 730 to 750 (FIQY…YAFC), 828 to 848 (GVVL…LQAG), and 876 to 896 (LYSV…FLVV).

The protein belongs to the chitin synthase family. Class I subfamily.

The protein resides in the cell membrane. The enzyme catalyses [(1-&gt;4)-N-acetyl-beta-D-glucosaminyl](n) + UDP-N-acetyl-alpha-D-glucosamine = [(1-&gt;4)-N-acetyl-beta-D-glucosaminyl](n+1) + UDP + H(+). Its function is as follows. Polymerizes chitin, a structural polymer of the cell wall and septum, by transferring the sugar moiety of UDP-GlcNAc to the non-reducing end of the growing chitin polymer. The protein is Chitin synthase A (CHSA) of Ampelomyces quisqualis (Powdery mildew agent).